Here is a 159-residue protein sequence, read N- to C-terminus: ATP synthase subunit b (159 aa).

Residues 2-22 (EFNLVTIGFTIVNFIILMLIL) form a helical membrane-spanning segment.

This sequence belongs to the ATPase B chain family. F-type ATPases have 2 components, F(1) - the catalytic core - and F(0) - the membrane proton channel. F(1) has five subunits: alpha(3), beta(3), gamma(1), delta(1), epsilon(1). F(0) has three main subunits: a(1), b(2) and c(10-14). The alpha and beta chains form an alternating ring which encloses part of the gamma chain. F(1) is attached to F(0) by a central stalk formed by the gamma and epsilon chains, while a peripheral stalk is formed by the delta and b chains.

The protein resides in the cell membrane. F(1)F(0) ATP synthase produces ATP from ADP in the presence of a proton or sodium gradient. F-type ATPases consist of two structural domains, F(1) containing the extramembraneous catalytic core and F(0) containing the membrane proton channel, linked together by a central stalk and a peripheral stalk. During catalysis, ATP synthesis in the catalytic domain of F(1) is coupled via a rotary mechanism of the central stalk subunits to proton translocation. In terms of biological role, component of the F(0) channel, it forms part of the peripheral stalk, linking F(1) to F(0). This is ATP synthase subunit b from Clostridium acetobutylicum (strain ATCC 824 / DSM 792 / JCM 1419 / IAM 19013 / LMG 5710 / NBRC 13948 / NRRL B-527 / VKM B-1787 / 2291 / W).